We begin with the raw amino-acid sequence, 311 residues long: Olfactory receptor 2A5 (311 aa).

The Extracellular segment spans residues 1–24 (MTKNQTWVTEFILLGFPLSLRIQM). N-linked (GlcNAc...) asparagine glycosylation is present at Asn-4. The chain crosses the membrane as a helical span at residues 25-48 (LLSGLFSLLYVFTLLGNGAILGLI). The Cytoplasmic segment spans residues 49–56 (WLDSRLHT). Residues 57-78 (PMYFFLSHLAIIDISYASNNVP) form a helical membrane-spanning segment. Residues 79–100 (KMLTNLGLNKRKTISFVPCTMQ) lie on the Extracellular side of the membrane. A disulfide bridge connects residues Cys-97 and Cys-189. The chain crosses the membrane as a helical span at residues 101–120 (TFLYMAFAHTECLILVMMSY). Residues 121 to 139 (DRYMAICHPLQYSVIMRWG) lie on the Cytoplasmic side of the membrane. A helical transmembrane segment spans residues 140 to 158 (VCTVLAVTSWACGSLLALV). Over 159-196 (HVVLILRLPFCGPHEINHFFCEILSVLKLACADTWLNQ) the chain is Extracellular. A helical transmembrane segment spans residues 197–219 (VVIFAASVFILVGPLCLVLVSYS). At 220–236 (RILAAILRIQSGEGRRK) the chain is on the cytoplasmic side. Residues 237-259 (AFSTCSSHLCMVGLFFGSAIVMY) form a helical membrane-spanning segment. Over 260–272 (MAPKSRHPEEQQK) the chain is Extracellular. The chain crosses the membrane as a helical span at residues 273-292 (VLSLFYSLFNPMLNPLIYSL). At 293–311 (RNAEVKGALKRVLWKQRSK) the chain is on the cytoplasmic side.

This sequence belongs to the G-protein coupled receptor 1 family.

Its subcellular location is the cell membrane. Functionally, odorant receptor. The polypeptide is Olfactory receptor 2A5 (OR2A5) (Homo sapiens (Human)).